Here is a 196-residue protein sequence, read N- to C-terminus: Ribosome maturation factor RimP (196 aa).

A disordered region spans residues leucine 164 to glutamate 196. Residues glycine 173–lysine 182 show a composition bias toward basic residues.

It belongs to the RimP family.

It is found in the cytoplasm. Required for maturation of 30S ribosomal subunits. This chain is Ribosome maturation factor RimP, found in Xanthomonas euvesicatoria pv. vesicatoria (strain 85-10) (Xanthomonas campestris pv. vesicatoria).